A 190-amino-acid chain; its full sequence is Potassium-transporting ATPase KdpC subunit (190 aa).

A helical membrane pass occupies residues Thr-10–Gly-30.

This sequence belongs to the KdpC family. In terms of assembly, the system is composed of three essential subunits: KdpA, KdpB and KdpC.

The protein localises to the cell inner membrane. Functionally, part of the high-affinity ATP-driven potassium transport (or Kdp) system, which catalyzes the hydrolysis of ATP coupled with the electrogenic transport of potassium into the cytoplasm. This subunit acts as a catalytic chaperone that increases the ATP-binding affinity of the ATP-hydrolyzing subunit KdpB by the formation of a transient KdpB/KdpC/ATP ternary complex. In Escherichia coli O127:H6 (strain E2348/69 / EPEC), this protein is Potassium-transporting ATPase KdpC subunit.